The primary structure comprises 548 residues: Membrane protein insertase YidC (548 aa).

The helical transmembrane segment at 6–26 threads the bilayer; sequence NLLIIALLFVSFMIWQAWEQD. Residues 28–52 form a disordered region; the sequence is NPQPQQQTTQTTTTAAGSAADQGVP. Positions 29–41 are enriched in low complexity; that stretch reads PQPQQQTTQTTTT. The next 4 membrane-spanning stretches (helical) occupy residues 345–365, 420–440, 458–478, and 499–519; these read KFIH…TFIV, LGGC…YYML, LSAQ…MFFI, and PVIF…YYIV.

Belongs to the OXA1/ALB3/YidC family. Type 1 subfamily. Interacts with the Sec translocase complex via SecD. Specifically interacts with transmembrane segments of nascent integral membrane proteins during membrane integration.

The protein localises to the cell inner membrane. Required for the insertion and/or proper folding and/or complex formation of integral membrane proteins into the membrane. Involved in integration of membrane proteins that insert both dependently and independently of the Sec translocase complex, as well as at least some lipoproteins. Aids folding of multispanning membrane proteins. This chain is Membrane protein insertase YidC, found in Klebsiella pneumoniae (strain 342).